Here is a 327-residue protein sequence, read N- to C-terminus: Aldo-keto reductase FVEG_12638 (327 aa).

Position 51 (Asp-51) interacts with NADP(+). Tyr-56 (proton donor) is an active-site residue. Residue His-122 coordinates substrate. NADP(+) is bound by residues 152–153, 202–212, and 286–294; these read SE, GPLGHGWLVED, and ENFTSRDIE.

Belongs to the aldo/keto reductase family. Aldo/keto reductase 2 subfamily.

Its function is as follows. Aldo-keto reductase; part of the Fusarium detoxification of benzoxazolinone cluster 2 (FDB2) involved in the degradation of benzoxazolinones produced by the host plant. Maize, wheat, and rye produce the 2 benzoxazinone phytoanticipins 2,4-dihy-droxy-7-methoxy-1,4-benzoxazin-3-one (DIMBOA) and 2,4-dihydroxy-1,4-benzoxazin-3-one (DIBOA) that, due to their inherent instability once released, spontaneously degrade to the more stable corresponding benzoxazolinones, 6-methoxy-2-benzoxazolinone (MBOA) and 2-benzoxazolinone (BOA), respectively. The first step in the detoxification of benzoxazolinones involves the hydrolysis of the cyclic ester bond of benzoxazolinones by the FDB1 cluster gamma-lactamase MBL1 to aminophenols. MBL1 is able to convert BOA into 2-aminophenol (2-AP), as well as MBOA into 5-methoxy-2-aminophenol (2-AMP). The FDB2 cluster N-malonyltransferase FDB2/NAT1 then metabolizes aminophenols via N-malonylation to non-toxic malonamic acids. FDB2/NAT1 converts 2-AP into N-(2-hydroxyphenyl) malonamic acid (HPMA) and 2-AMP into N-(2-hydroxy-4-methoxyphenyl) malonamic acid (HMPMA). The duplicated dienlactone hydrolases DLH1 and DLH2 may provide redundant function for hydrolyzing the lactone moiety in the BOA molecule. The roles of the amidases an other enzymes encoded by the 2 FDB clusters have not been identified so far. The chain is Aldo-keto reductase FVEG_12638 from Gibberella moniliformis (strain M3125 / FGSC 7600) (Maize ear and stalk rot fungus).